Consider the following 160-residue polypeptide: Crossover junction endodeoxyribonuclease RuvC (160 aa).

Catalysis depends on residues Asp-7, Glu-73, and Asp-145. 3 residues coordinate Mg(2+): Asp-7, Glu-73, and Asp-145.

It belongs to the RuvC family. As to quaternary structure, homodimer which binds Holliday junction (HJ) DNA. The HJ becomes 2-fold symmetrical on binding to RuvC with unstacked arms; it has a different conformation from HJ DNA in complex with RuvA. In the full resolvosome a probable DNA-RuvA(4)-RuvB(12)-RuvC(2) complex forms which resolves the HJ. It depends on Mg(2+) as a cofactor.

It is found in the cytoplasm. It catalyses the reaction Endonucleolytic cleavage at a junction such as a reciprocal single-stranded crossover between two homologous DNA duplexes (Holliday junction).. In terms of biological role, the RuvA-RuvB-RuvC complex processes Holliday junction (HJ) DNA during genetic recombination and DNA repair. Endonuclease that resolves HJ intermediates. Cleaves cruciform DNA by making single-stranded nicks across the HJ at symmetrical positions within the homologous arms, yielding a 5'-phosphate and a 3'-hydroxyl group; requires a central core of homology in the junction. The consensus cleavage sequence is 5'-(A/T)TT(C/G)-3'. Cleavage occurs on the 3'-side of the TT dinucleotide at the point of strand exchange. HJ branch migration catalyzed by RuvA-RuvB allows RuvC to scan DNA until it finds its consensus sequence, where it cleaves and resolves the cruciform DNA. The protein is Crossover junction endodeoxyribonuclease RuvC of Synechococcus sp. (strain CC9311).